The sequence spans 155 residues: METPRASLSLGRWSLWLLLLGLALPSASAQALSYREAVLRAVDQLNEQSSEPNIYRLLELDQPPQDDEDPDSPKRVSFRVKETVCSRTTQQPPEQCDFKENGLLKRCEGTVTLDQVRGNFDITCNNHQSIRITKQPWAPPQAARLCRIVVIRVCR.

Positions 1-29 are cleaved as a signal peptide; that stretch reads METPRASLSLGRWSLWLLLLGLALPSASA. Gln30 carries the post-translational modification Pyrrolidone carboxylic acid. The propeptide occupies 30 to 143; that stretch reads QALSYREAVL…KQPWAPPQAA (114 aa). Intrachain disulfides connect Cys85–Cys96, Cys107–Cys124, and Cys146–Cys154.

It belongs to the cathelicidin family. Large granules of neutrophils.

Its subcellular location is the secreted. Functionally, potent microbicidal activity; active against S.aureus and E.coli. In Bos taurus (Bovine), this protein is Cathelicidin-1 (CATHL1).